Consider the following 254-residue polypeptide: 3-oxo-5-alpha-steroid 4-dehydrogenase 2 (254 aa).

4 helical membrane-spanning segments follow: residues 8-28 (SPVL…LYVA), 72-92 (PLSL…VHYF), 146-166 (FCLG…SDYI), and 206-226 (LATW…FLGL).

This sequence belongs to the steroid 5-alpha reductase family.

It localises to the microsome membrane. The protein localises to the endoplasmic reticulum membrane. The enzyme catalyses a 3-oxo-5alpha-steroid + NADP(+) = a 3-oxo-Delta(4)-steroid + NADPH + H(+). It carries out the reaction 17beta-hydroxy-5alpha-androstan-3-one + NADP(+) = testosterone + NADPH + H(+). The catalysed reaction is 5alpha-pregnane-3,20-dione + NADP(+) = progesterone + NADPH + H(+). Functionally, converts testosterone (T) into 5-alpha-dihydrotestosterone (DHT) and progesterone or corticosterone into their corresponding 5-alpha-3-oxosteroids. It plays a central role in sexual differentiation and androgen physiology. The protein is 3-oxo-5-alpha-steroid 4-dehydrogenase 2 (SRD5A2) of Macaca fascicularis (Crab-eating macaque).